Reading from the N-terminus, the 123-residue chain is Large ribosomal subunit protein bL12 (123 aa).

This sequence belongs to the bacterial ribosomal protein bL12 family. In terms of assembly, homodimer. Part of the ribosomal stalk of the 50S ribosomal subunit. Forms a multimeric L10(L12)X complex, where L10 forms an elongated spine to which 2 to 4 L12 dimers bind in a sequential fashion. Binds GTP-bound translation factors.

Its function is as follows. Forms part of the ribosomal stalk which helps the ribosome interact with GTP-bound translation factors. Is thus essential for accurate translation. The polypeptide is Large ribosomal subunit protein bL12 (Bartonella quintana (strain Toulouse) (Rochalimaea quintana)).